The chain runs to 237 residues: Class B acid phosphatase (237 aa).

The N-terminal stretch at Met-1 to Ala-23 is a signal peptide. Asp-69 acts as the Nucleophile in catalysis. Positions 69 and 71 each coordinate Mg(2+). The Proton donor role is filled by Asp-71. Residues Thr-137 to Gly-138 and Lys-177 contribute to the substrate site. Asp-192 contacts Mg(2+).

It belongs to the class B bacterial acid phosphatase family. In terms of assembly, homotetramer. The cofactor is Mg(2+).

Its subcellular location is the periplasm. The enzyme catalyses a phosphate monoester + H2O = an alcohol + phosphate. In terms of biological role, dephosphorylates several organic phosphate monoesters. Also has a phosphotransferase activity catalyzing the transfer of low-energy phosphate groups from organic phosphate monoesters to free hydroxyl groups of various organic compounds. This is Class B acid phosphatase from Salmonella arizonae (strain ATCC BAA-731 / CDC346-86 / RSK2980).